The sequence spans 522 residues: Solute carrier family 2, facilitated glucose transporter member 2 (522 aa).

The Cytoplasmic segment spans residues 1–10 (MSEDKITGTL). The chain crosses the membrane as a helical span at residues 11-31 (AFTVFTAVLGSFQFGYDIGVI). Over 32–96 (NAPQEVIISH…SAHIVTMLWS (65 aa)) the chain is Extracellular. N-linked (GlcNAc...) asparagine glycosylation occurs at Asn62. Residues 97 to 117 (LSVSSFAVGGMVASFFGGWLG) form a helical membrane-spanning segment. Over 118–125 (DKLGRIKA) the chain is Cytoplasmic. The chain crosses the membrane as a helical span at residues 126–146 (MLAANSLSLTGALLMGCSKFG). Residues 147–156 (PAHALIIAGR) lie on the Extracellular side of the membrane. Residues 157–177 (SVSGLYCGLISGLVPMYIGEI) traverse the membrane as a helical segment. Topologically, residues 178-185 (APTTLRGA) are cytoplasmic. A helical transmembrane segment spans residues 186 to 206 (LGTLHQLALVTGILISQIAGL). Gln191 is a binding site for D-glucose. The Extracellular portion of the chain corresponds to 207–215 (SFILGNQDY). Residues 216-236 (WHILLGLSAVPALLQCLLLLF) traverse the membrane as a helical segment. Residues 237–301 (CPESPRYLYL…LFTDPNYRQP (65 aa)) lie on the Cytoplasmic side of the membrane. The chain crosses the membrane as a helical span at residues 302–322 (IVVALMLHLAQQFSGINGIFY). Residues 312-313 (QQ) and Asn318 each bind D-glucose. Over 323 to 337 (YSTSIFQTAGISQPV) the chain is Extracellular. A helical membrane pass occupies residues 338–358 (YATIGVGAINMIFTAVSVLLV). Asn347 is a D-glucose binding site. Residues 359 to 365 (EKAGRRT) are Cytoplasmic-facing. Residues 366 to 386 (LFLAGMIGMFFCAVFMSLGLV) traverse the membrane as a helical segment. At 387-401 (LLDKFTWMSYVSMTA) the chain is on the extracellular side. Residues 402–422 (IFLFVSFFEIGPGPIPWFMVA) traverse the membrane as a helical segment. 2 residues coordinate D-glucose: Glu410 and Trp418. Residues 423 to 431 (EFFSQGPRP) lie on the Cytoplasmic side of the membrane. A helical membrane pass occupies residues 432-452 (TALALAAFSNWVCNFIIALCF). Residues 453–459 (QYIADFL) are Extracellular-facing. Residues 460–480 (GPYVFFLFAGVVLVFTLFTFF) form a helical membrane-spanning segment. Residues 481-522 (KVPETKGKSFDEIAAEFRKKSGSAPPRKATVQMEFLGSSETV) are Cytoplasmic-facing. Thr521 carries the post-translational modification Phosphothreonine.

It belongs to the major facilitator superfamily. Sugar transporter (TC 2.A.1.1) family. Glucose transporter subfamily. In terms of processing, N-glycosylated; required for stability and retention at the cell surface of pancreatic beta cells. In terms of tissue distribution, present in liver, intestine, kidney and beta-pancreatic islet cells.

The protein localises to the cell membrane. It carries out the reaction D-glucose(out) = D-glucose(in). The catalysed reaction is D-fructose(out) = D-fructose(in). It catalyses the reaction L-dehydroascorbate(out) = L-dehydroascorbate(in). The enzyme catalyses D-galactose(in) = D-galactose(out). Its activity is regulated as follows. D-glucose and maltose competitively inhibit fructose transport. D-glucose, D-fructose and maltose inhibit deoxyglucose transport. Facilitative hexose transporter that mediates the transport of glucose, fructose and galactose. Likely mediates the bidirectional transfer of glucose across the plasma membrane of hepatocytes and is responsible for uptake of glucose by the beta cells; may comprise part of the glucose-sensing mechanism of the beta cell. May also participate with the Na(+)/glucose cotransporter in the transcellular transport of glucose in the small intestine and kidney. Also able to mediate the transport of dehydroascorbate. The chain is Solute carrier family 2, facilitated glucose transporter member 2 from Rattus norvegicus (Rat).